A 156-amino-acid chain; its full sequence is Cyanate hydratase (156 aa).

Catalysis depends on residues R96, E99, and S122.

Belongs to the cyanase family.

The enzyme catalyses cyanate + hydrogencarbonate + 3 H(+) = NH4(+) + 2 CO2. Catalyzes the reaction of cyanate with bicarbonate to produce ammonia and carbon dioxide. This is Cyanate hydratase from Burkholderia pseudomallei (strain 1106a).